We begin with the raw amino-acid sequence, 150 residues long: Large ribosomal subunit protein bL9 (150 aa).

This sequence belongs to the bacterial ribosomal protein bL9 family.

In terms of biological role, binds to the 23S rRNA. The chain is Large ribosomal subunit protein bL9 from Streptococcus pyogenes serotype M6 (strain ATCC BAA-946 / MGAS10394).